We begin with the raw amino-acid sequence, 499 residues long: Guanosine-5'-triphosphate,3'-diphosphate pyrophosphatase (499 aa).

Belongs to the GppA/Ppx family. GppA subfamily.

It catalyses the reaction guanosine 3'-diphosphate 5'-triphosphate + H2O = guanosine 3',5'-bis(diphosphate) + phosphate + H(+). Its pathway is purine metabolism; ppGpp biosynthesis; ppGpp from GTP: step 2/2. Catalyzes the conversion of pppGpp to ppGpp. Guanosine pentaphosphate (pppGpp) is a cytoplasmic signaling molecule which together with ppGpp controls the 'stringent response', an adaptive process that allows bacteria to respond to amino acid starvation, resulting in the coordinated regulation of numerous cellular activities. This Klebsiella pneumoniae (strain 342) protein is Guanosine-5'-triphosphate,3'-diphosphate pyrophosphatase.